Consider the following 618-residue polypeptide: Probable Xaa-Pro aminopeptidase P (618 aa).

4 residues coordinate Mn(2+): D414, D425, E523, and E537.

This sequence belongs to the peptidase M24B family. Requires Mn(2+) as cofactor.

The enzyme catalyses Release of any N-terminal amino acid, including proline, that is linked to proline, even from a dipeptide or tripeptide.. Its function is as follows. Catalyzes the removal of a penultimate prolyl residue from the N-termini of peptides. This chain is Probable Xaa-Pro aminopeptidase P (AMPP), found in Metarhizium robertsii (strain ARSEF 23 / ATCC MYA-3075) (Metarhizium anisopliae (strain ARSEF 23)).